A 604-amino-acid chain; its full sequence is Proline--tRNA ligase (604 aa).

This sequence belongs to the class-II aminoacyl-tRNA synthetase family. ProS type 1 subfamily. As to quaternary structure, homodimer.

Its subcellular location is the cytoplasm. It carries out the reaction tRNA(Pro) + L-proline + ATP = L-prolyl-tRNA(Pro) + AMP + diphosphate. Its function is as follows. Catalyzes the attachment of proline to tRNA(Pro) in a two-step reaction: proline is first activated by ATP to form Pro-AMP and then transferred to the acceptor end of tRNA(Pro). As ProRS can inadvertently accommodate and process non-cognate amino acids such as alanine and cysteine, to avoid such errors it has two additional distinct editing activities against alanine. One activity is designated as 'pretransfer' editing and involves the tRNA(Pro)-independent hydrolysis of activated Ala-AMP. The other activity is designated 'posttransfer' editing and involves deacylation of mischarged Ala-tRNA(Pro). The misacylated Cys-tRNA(Pro) is not edited by ProRS. The polypeptide is Proline--tRNA ligase (Trichormus variabilis (strain ATCC 29413 / PCC 7937) (Anabaena variabilis)).